Reading from the N-terminus, the 410-residue chain is 2-oxoglutarate-dependent dioxygenase AOP3 (410 aa).

The Fe2OG dioxygenase domain maps to 258–355 (GNASVGAKEA…RYAAALFSNP (98 aa)). Fe cation-binding residues include H278, D280, and H335. Position 346 (R346) interacts with 2-oxoglutarate.

Belongs to the iron/ascorbate-dependent oxidoreductase family. Fe(2+) serves as cofactor.

Functionally, 2-oxoglutarate-dependent dioxygenase involved in glucosinolates biosynthesis. Catalyzes the conversion of methylsulfinylalkyl glucosinolates to hydroxyalkyl glucosinolates. This Arabidopsis thaliana (Mouse-ear cress) protein is 2-oxoglutarate-dependent dioxygenase AOP3 (AOP3).